The chain runs to 546 residues: Glucose-6-phosphate isomerase (546 aa).

Residue Glu-355 is the Proton donor of the active site. Active-site residues include His-386 and Lys-510.

This sequence belongs to the GPI family.

Its subcellular location is the cytoplasm. The enzyme catalyses alpha-D-glucose 6-phosphate = beta-D-fructose 6-phosphate. The protein operates within carbohydrate biosynthesis; gluconeogenesis. It functions in the pathway carbohydrate degradation; glycolysis; D-glyceraldehyde 3-phosphate and glycerone phosphate from D-glucose: step 2/4. Functionally, catalyzes the reversible isomerization of glucose-6-phosphate to fructose-6-phosphate. This chain is Glucose-6-phosphate isomerase, found in Buchnera aphidicola subsp. Cinara cedri (strain Cc).